The sequence spans 89 residues: Small ribosomal subunit protein uS15 (89 aa).

Belongs to the universal ribosomal protein uS15 family. As to quaternary structure, part of the 30S ribosomal subunit. Forms a bridge to the 50S subunit in the 70S ribosome, contacting the 23S rRNA.

Its function is as follows. One of the primary rRNA binding proteins, it binds directly to 16S rRNA where it helps nucleate assembly of the platform of the 30S subunit by binding and bridging several RNA helices of the 16S rRNA. In terms of biological role, forms an intersubunit bridge (bridge B4) with the 23S rRNA of the 50S subunit in the ribosome. This is Small ribosomal subunit protein uS15 from Geobacillus kaustophilus (strain HTA426).